Reading from the N-terminus, the 369-residue chain is 3-isopropylmalate dehydrogenase (369 aa).

77-90 (GPKWDDLPFDKKPE) provides a ligand contact to NAD(+). Positions 97, 107, 135, and 226 each coordinate substrate. Residues Asp-226, Asp-250, and Asp-254 each coordinate Mg(2+). 289 to 301 (GSAPDIAGKDMAN) lines the NAD(+) pocket.

The protein belongs to the isocitrate and isopropylmalate dehydrogenases family. LeuB type 1 subfamily. As to quaternary structure, homodimer. The cofactor is Mg(2+). It depends on Mn(2+) as a cofactor.

It is found in the cytoplasm. The catalysed reaction is (2R,3S)-3-isopropylmalate + NAD(+) = 4-methyl-2-oxopentanoate + CO2 + NADH. Its pathway is amino-acid biosynthesis; L-leucine biosynthesis; L-leucine from 3-methyl-2-oxobutanoate: step 3/4. In terms of biological role, catalyzes the oxidation of 3-carboxy-2-hydroxy-4-methylpentanoate (3-isopropylmalate) to 3-carboxy-4-methyl-2-oxopentanoate. The product decarboxylates to 4-methyl-2 oxopentanoate. The sequence is that of 3-isopropylmalate dehydrogenase from Paramagnetospirillum magneticum (strain ATCC 700264 / AMB-1) (Magnetospirillum magneticum).